Reading from the N-terminus, the 597-residue chain is ATP-dependent lipid A-core flippase (597 aa).

A run of 6 helical transmembrane segments spans residues 26–46 (LWPY…AMAV), 76–96 (WFVP…QYAS), 138–158 (AIVF…VTLV), 164–184 (VVFL…IVAV), 263–283 (QPLT…IAVV), and 292–312 (VGGF…LKHL). The region spanning 38–321 (IGAIVAMAVS…LMDVNQPLQR (284 aa)) is the ABC transmembrane type-1 domain. Residues 353–590 (VEFRDVSFVY…DGLYAHLHRI (238 aa)) form the ABC transporter domain. 390 to 397 (GPSGSGKT) contacts ATP.

The protein belongs to the ABC transporter superfamily. Lipid exporter (TC 3.A.1.106) family. As to quaternary structure, homodimer.

It is found in the cell inner membrane. It catalyses the reaction ATP + H2O + lipid A-core oligosaccharideSide 1 = ADP + phosphate + lipid A-core oligosaccharideSide 2.. Involved in lipopolysaccharide (LPS) biosynthesis. Translocates lipid A-core from the inner to the outer leaflet of the inner membrane. Transmembrane domains (TMD) form a pore in the inner membrane and the ATP-binding domain (NBD) is responsible for energy generation. In Paraburkholderia xenovorans (strain LB400), this protein is ATP-dependent lipid A-core flippase.